Reading from the N-terminus, the 224-residue chain is MPSDYAEIRNRVEHYFDRTATRAWARLTTADEKVSKVRQTVREGRDTMRAVMLSRLPDDLTGCRVMDAGCGTGLTTVELARRGADVVAVDISPQLIDIAKDRLPPELRGKVSFHVGDMADPALGQFDYVVAMDSLIYYRAPDIGRVLTELGKRTHSAIVFTVAPKTAFLMAFWWLGKLFPRSNRSPVMIPHALDKLQRHAGDSLIKIDRVARGFYISECLEYRP.

This sequence belongs to the class I-like SAM-binding methyltransferase superfamily. Magnesium protoporphyrin O-methyltransferase family.

It catalyses the reaction Mg-protoporphyrin IX + S-adenosyl-L-methionine = Mg-protoporphyrin IX 13-monomethyl ester + S-adenosyl-L-homocysteine. Its pathway is porphyrin-containing compound metabolism; bacteriochlorophyll biosynthesis (light-independent). Converts Mg-protoporphyrin IX to Mg-protoporphyrin IX methylester using S-adenosyl-L-methionine as a cofactor. The protein is Magnesium-protoporphyrin O-methyltransferase (bchM) of Rhodobacter capsulatus (Rhodopseudomonas capsulata).